Reading from the N-terminus, the 357-residue chain is 4-hydroxy-3-methylbut-2-en-1-yl diphosphate synthase (flavodoxin) (357 aa).

The [4Fe-4S] cluster site is built by Cys-265, Cys-268, Cys-300, and Glu-307.

It belongs to the IspG family. In terms of assembly, homodimer. It depends on [4Fe-4S] cluster as a cofactor.

It catalyses the reaction (2E)-4-hydroxy-3-methylbut-2-enyl diphosphate + oxidized [flavodoxin] + H2O + 2 H(+) = 2-C-methyl-D-erythritol 2,4-cyclic diphosphate + reduced [flavodoxin]. It participates in isoprenoid biosynthesis; isopentenyl diphosphate biosynthesis via DXP pathway; isopentenyl diphosphate from 1-deoxy-D-xylulose 5-phosphate: step 5/6. Its function is as follows. Converts 2C-methyl-D-erythritol 2,4-cyclodiphosphate (ME-2,4cPP) into 1-hydroxy-2-methyl-2-(E)-butenyl 4-diphosphate. In Aquifex aeolicus (strain VF5), this protein is 4-hydroxy-3-methylbut-2-en-1-yl diphosphate synthase (flavodoxin).